The following is a 157-amino-acid chain: Putative 4-hydroxy-4-methyl-2-oxoglutarate aldolase (157 aa).

Substrate contacts are provided by residues G78 to I81 and R100. D101 is an a divalent metal cation binding site.

It belongs to the class II aldolase/RraA-like family. Homotrimer. It depends on a divalent metal cation as a cofactor.

The catalysed reaction is 4-hydroxy-4-methyl-2-oxoglutarate = 2 pyruvate. The enzyme catalyses oxaloacetate + H(+) = pyruvate + CO2. Catalyzes the aldol cleavage of 4-hydroxy-4-methyl-2-oxoglutarate (HMG) into 2 molecules of pyruvate. Also contains a secondary oxaloacetate (OAA) decarboxylase activity due to the common pyruvate enolate transition state formed following C-C bond cleavage in the retro-aldol and decarboxylation reactions. The protein is Putative 4-hydroxy-4-methyl-2-oxoglutarate aldolase of Mycobacterium leprae (strain Br4923).